A 315-amino-acid chain; its full sequence is Hydroxysteroid 11-beta-dehydrogenase 1-like protein (315 aa).

Residues 1 to 15 (MKVLLLTGLGALFFA) form the signal peptide. Residues 36 to 62 (GANA…TAHT), 87 to 88 (DM), and 114 to 116 (NHI) contribute to the NADP(+) site. S165 contacts substrate. Y178 serves as the catalytic Proton acceptor. NADP(+) contacts are provided by residues 178-182 (YSAAK) and 211-217 (GLRDRAS). Residues 221–286 (AVRSSTSRPR…SKTEKNDGHL (66 aa)) are disordered. Basic and acidic residues predominate over residues 277-286 (SKTEKNDGHL).

This sequence belongs to the short-chain dehydrogenases/reductases (SDR) family. Highly expressed in the brain.

Its subcellular location is the secreted. The catalysed reaction is cortisone + NADPH + H(+) = cortisol + NADP(+). Its function is as follows. Unidirectional NADP(+)-dependent cortisol dehydrogenase (in vitro). The protein is Hydroxysteroid 11-beta-dehydrogenase 1-like protein (HSD11B1L) of Homo sapiens (Human).